The primary structure comprises 1465 residues: DNA polymerase III polC-type (1465 aa).

The Exonuclease domain maps to 427–583; sequence YVVFDVETTG…YDAEATGRLL (157 aa).

This sequence belongs to the DNA polymerase type-C family. PolC subfamily.

The protein resides in the cytoplasm. It catalyses the reaction DNA(n) + a 2'-deoxyribonucleoside 5'-triphosphate = DNA(n+1) + diphosphate. In terms of biological role, required for replicative DNA synthesis. This DNA polymerase also exhibits 3' to 5' exonuclease activity. This is DNA polymerase III polC-type from Streptococcus pyogenes serotype M3 (strain ATCC BAA-595 / MGAS315).